Here is a 121-residue protein sequence, read N- to C-terminus: uncharacterized protein (121 aa).

This sequence to E.coli YcjD and H.influenzae HI_1162.

This is an uncharacterized protein from Haemophilus influenzae (strain ATCC 51907 / DSM 11121 / KW20 / Rd).